Reading from the N-terminus, the 486-residue chain is 23S rRNA (uracil(1939)-C(5))-methyltransferase RlmD (486 aa).

The TRAM domain maps to 14-76 (AAQDGSGLPE…NHWEQANLTA (63 aa)). 4 residues coordinate [4Fe-4S] cluster: Cys89, Cys99, Cys102, and Cys181. S-adenosyl-L-methionine contacts are provided by Gln289, Phe318, Asn323, Glu339, Asn374, and Asp395. Catalysis depends on Cys442, which acts as the Nucleophile.

This sequence belongs to the class I-like SAM-binding methyltransferase superfamily. RNA M5U methyltransferase family. RlmD subfamily.

The enzyme catalyses uridine(1939) in 23S rRNA + S-adenosyl-L-methionine = 5-methyluridine(1939) in 23S rRNA + S-adenosyl-L-homocysteine + H(+). Functionally, catalyzes the formation of 5-methyl-uridine at position 1939 (m5U1939) in 23S rRNA. This is 23S rRNA (uracil(1939)-C(5))-methyltransferase RlmD from Verminephrobacter eiseniae (strain EF01-2).